The chain runs to 398 residues: Enoyl-[acyl-carrier-protein] reductase [NADH] (398 aa).

NAD(+) contacts are provided by residues Gly48–Tyr53, Phe74–Glu75, Asp111–Ala112, and Leu139–Ala140. Tyr225 contacts substrate. Catalysis depends on Tyr235, which acts as the Proton donor. NAD(+) is bound by residues Lys244 and Val273–Thr275.

Belongs to the TER reductase family. As to quaternary structure, monomer.

It catalyses the reaction a 2,3-saturated acyl-[ACP] + NAD(+) = a (2E)-enoyl-[ACP] + NADH + H(+). It participates in lipid metabolism; fatty acid biosynthesis. In terms of biological role, involved in the final reduction of the elongation cycle of fatty acid synthesis (FAS II). Catalyzes the reduction of a carbon-carbon double bond in an enoyl moiety that is covalently linked to an acyl carrier protein (ACP). This chain is Enoyl-[acyl-carrier-protein] reductase [NADH], found in Paraburkholderia xenovorans (strain LB400).